The following is a 942-amino-acid chain: Lon protease homolog 4, chloroplastic/mitochondrial (942 aa).

A Phosphoserine modification is found at S54. The 223-residue stretch at 79–301 (VIALPLPHKP…LTLELVKKEV (223 aa)) folds into the Lon N-terminal domain. 456-463 (GPTGVGKT) serves as a coordination point for ATP. The segment at 673–725 (ISDDVTTDTEETKSLAKTDLESPETSAEGSTVLTDELATGDPTESTTEQSGEV) is disordered. The segment covering 682-692 (EETKSLAKTDL) has biased composition (basic and acidic residues). Positions 695–705 (PETSAEGSTVL) are enriched in polar residues. The region spanning 756–940 (QTPVGVVMGL…EQIFELAFGY (185 aa)) is the Lon proteolytic domain. Residues S846 and K889 contribute to the active site.

It belongs to the peptidase S16 family. In terms of assembly, homohexamer or homoheptamer. Organized in a ring with a central cavity.

It localises to the mitochondrion matrix. The protein resides in the plastid. Its subcellular location is the chloroplast thylakoid membrane. The catalysed reaction is Hydrolysis of proteins in presence of ATP.. ATP-dependent serine protease that mediates the selective degradation of misfolded, unassembled or oxidatively damaged polypeptides as well as certain short-lived regulatory proteins in the mitochondrial matrix. May also have a chaperone function in the assembly of inner membrane protein complexes. Participates in the regulation of mitochondrial gene expression and in the maintenance of the integrity of the mitochondrial genome. Binds to mitochondrial DNA in a site-specific manner. This is Lon protease homolog 4, chloroplastic/mitochondrial (LON4) from Arabidopsis thaliana (Mouse-ear cress).